A 636-amino-acid chain; its full sequence is ATP-dependent zinc metalloprotease FtsH 1 (636 aa).

At 1–18 (MKLSPPKKNLPPQKNNEP) the chain is on the cytoplasmic side. A helical transmembrane segment spans residues 19-39 (PFPYLRLLVQVGIALFLVWIW). At 40 to 126 (QESLHKATVS…YGSVKPSLLS (87 aa)) the chain is on the periplasmic side. Residues 127-147 (QILFSWVVPILIFFLVWFALA) form a helical membrane-spanning segment. Topologically, residues 148 to 636 (RFMGGGGAGY…KEAPSYSSTL (489 aa)) are cytoplasmic. ATP is bound at residue 220-227 (GPPGTGKT). Residue His442 participates in Zn(2+) binding. Glu443 is an active-site residue. Residues His446 and Asp519 each contribute to the Zn(2+) site.

It in the central section; belongs to the AAA ATPase family. In the C-terminal section; belongs to the peptidase M41 family. As to quaternary structure, homohexamer. Zn(2+) serves as cofactor.

The protein localises to the cell inner membrane. Its function is as follows. Acts as a processive, ATP-dependent zinc metallopeptidase for both cytoplasmic and membrane proteins. Plays a role in the quality control of integral membrane proteins. This Methylacidiphilum infernorum (isolate V4) (Methylokorus infernorum (strain V4)) protein is ATP-dependent zinc metalloprotease FtsH 1.